A 238-amino-acid chain; its full sequence is tRNA (guanine-N(7)-)-methyltransferase (238 aa).

S-adenosyl-L-methionine is bound by residues E68, E93, D120, and D143. D143 is an active-site residue. Residues K147, D179, and 216-219 (TKFE) contribute to the substrate site.

This sequence belongs to the class I-like SAM-binding methyltransferase superfamily. TrmB family.

The enzyme catalyses guanosine(46) in tRNA + S-adenosyl-L-methionine = N(7)-methylguanosine(46) in tRNA + S-adenosyl-L-homocysteine. The protein operates within tRNA modification; N(7)-methylguanine-tRNA biosynthesis. In terms of biological role, catalyzes the formation of N(7)-methylguanine at position 46 (m7G46) in tRNA. The sequence is that of tRNA (guanine-N(7)-)-methyltransferase from Shewanella putrefaciens (strain CN-32 / ATCC BAA-453).